We begin with the raw amino-acid sequence, 318 residues long: Ribose-phosphate pyrophosphokinase 2 (318 aa).

Residue 96-101 (RQDKKD) coordinates ATP. Mg(2+) is bound by residues aspartate 128, histidine 130, aspartate 139, and aspartate 143. Histidine 130 contributes to the ATP binding site. Positions 212–227 (KDRVAILVDDMADTCG) are binding of phosphoribosylpyrophosphate.

This sequence belongs to the ribose-phosphate pyrophosphokinase family. Homodimer. The active form is probably a hexamer composed of 3 homodimers. Mg(2+) is required as a cofactor.

The catalysed reaction is D-ribose 5-phosphate + ATP = 5-phospho-alpha-D-ribose 1-diphosphate + AMP + H(+). The protein operates within metabolic intermediate biosynthesis; 5-phospho-alpha-D-ribose 1-diphosphate biosynthesis; 5-phospho-alpha-D-ribose 1-diphosphate from D-ribose 5-phosphate (route I): step 1/1. Activated by magnesium and inorganic phosphate. Competitively or non-competitively inhibited by ADP, 2,3-bisphosphoglyceride or GDP. Its function is as follows. Catalyzes the synthesis of phosphoribosylpyrophosphate (PRPP) that is essential for nucleotide synthesis. The polypeptide is Ribose-phosphate pyrophosphokinase 2 (Prps2) (Mus musculus (Mouse)).